Here is a 753-residue protein sequence, read N- to C-terminus: Catalase-peroxidase (753 aa).

The first 39 residues, 1-39 (MLPRVNKRSNCIAKKTSNRLISAVSLAIASLCISQSALA), serve as a signal peptide directing secretion. The tryptophyl-tyrosyl-methioninium (Trp-Tyr) (with M-267) cross-link spans 118 to 241 (WHSTGTYRMS…LAAVQMGLIY (124 aa)). Histidine 119 serves as the catalytic Proton acceptor. A cross-link (tryptophyl-tyrosyl-methioninium (Tyr-Met) (with W-118)) is located at residues 241 to 267 (YVNPEGPNGNHDPISAAADIRDVFARM). Residue histidine 282 coordinates heme b.

This sequence belongs to the peroxidase family. Peroxidase/catalase subfamily. As to quaternary structure, homodimer or homotetramer. It depends on heme b as a cofactor. In terms of processing, formation of the three residue Trp-Tyr-Met cross-link is important for the catalase, but not the peroxidase activity of the enzyme.

It carries out the reaction H2O2 + AH2 = A + 2 H2O. It catalyses the reaction 2 H2O2 = O2 + 2 H2O. Bifunctional enzyme with both catalase and broad-spectrum peroxidase activity. This chain is Catalase-peroxidase, found in Pseudoalteromonas atlantica (strain T6c / ATCC BAA-1087).